The chain runs to 192 residues: Thymidine kinase (192 aa).

ATP is bound by residues 9 to 16 and 87 to 90; these read SAMNAGKS and DECQ. Glu88 functions as the Proton acceptor in the catalytic mechanism. Zn(2+) contacts are provided by Cys145, Cys147, Cys182, and His185.

It belongs to the thymidine kinase family. In terms of assembly, homotetramer.

Its subcellular location is the cytoplasm. The enzyme catalyses thymidine + ATP = dTMP + ADP + H(+). The protein is Thymidine kinase of Vibrio vulnificus (strain CMCP6).